The sequence spans 264 residues: Tritrans,polycis-undecaprenyl-diphosphate synthase (geranylgeranyl-diphosphate specific) (264 aa).

The active site involves aspartate 43. Aspartate 43 contacts Mg(2+). Substrate contacts are provided by residues 44-47, tryptophan 48, histidine 60, and 88-90; these read GNRR and STE. The active-site Proton acceptor is asparagine 91. Substrate is bound by residues phenylalanine 92, arginine 94, arginine 213, and 219–221; that span reads RIS. Glutamate 232 contributes to the Mg(2+) binding site.

Belongs to the UPP synthase family. Homodimer. Mg(2+) is required as a cofactor.

It carries out the reaction geranylgeranyl diphosphate + 7 isopentenyl diphosphate = tri-trans,hepta-cis-undecaprenyl diphosphate + 7 diphosphate. Catalyzes the sequential condensation of isopentenyl diphosphate (IPP) with geranylgeranyl diphosphate (GGPP) to yield (2Z,6Z,10Z,14Z,18Z,22Z,26Z,30E,34E,38E)-undecaprenyl diphosphate (tritrans,heptacis-UPP). It is probably the precursor of glycosyl carrier lipids. The chain is Tritrans,polycis-undecaprenyl-diphosphate synthase (geranylgeranyl-diphosphate specific) from Pyrococcus horikoshii (strain ATCC 700860 / DSM 12428 / JCM 9974 / NBRC 100139 / OT-3).